A 95-amino-acid polypeptide reads, in one-letter code: MLFLKEEKDGVLLKVRVQPRAARNQVAGLYEDALKIRLTAPPVDGEANEACRAFLADSLSLPPSKVEIVSGHASRTKVVKIAGVGAEKVRRAFGL.

This sequence belongs to the UPF0235 family.

This is UPF0235 protein PTH_1821 from Pelotomaculum thermopropionicum (strain DSM 13744 / JCM 10971 / SI).